A 211-amino-acid polypeptide reads, in one-letter code: Protein-L-isoaspartate O-methyltransferase (211 aa).

Serine 60 is an active-site residue.

Belongs to the methyltransferase superfamily. L-isoaspartyl/D-aspartyl protein methyltransferase family.

The protein localises to the cytoplasm. It catalyses the reaction [protein]-L-isoaspartate + S-adenosyl-L-methionine = [protein]-L-isoaspartate alpha-methyl ester + S-adenosyl-L-homocysteine. Functionally, catalyzes the methyl esterification of L-isoaspartyl residues in peptides and proteins that result from spontaneous decomposition of normal L-aspartyl and L-asparaginyl residues. It plays a role in the repair and/or degradation of damaged proteins. In Pseudomonas paraeruginosa (strain DSM 24068 / PA7) (Pseudomonas aeruginosa (strain PA7)), this protein is Protein-L-isoaspartate O-methyltransferase.